Reading from the N-terminus, the 102-residue chain is RNA-binding protein Hfq (102 aa).

The region spanning 9 to 68 (DPFLNALRRERVPVSIYLVNGIKLQGQIESFDQFVILLKNTVSQMVYKHAISTVVPSRPV) is the Sm domain. The segment at 63–102 (VPSRPVSHHSNNAGGGTSNNYHHGSNAQGSGAQQDSEETE) is disordered. Residues 70–96 (HHSNNAGGGTSNNYHHGSNAQGSGAQQ) are compositionally biased toward polar residues.

Belongs to the Hfq family. As to quaternary structure, homohexamer.

In terms of biological role, RNA chaperone that binds small regulatory RNA (sRNAs) and mRNAs to facilitate mRNA translational regulation in response to envelope stress, environmental stress and changes in metabolite concentrations. Also binds with high specificity to tRNAs. This Salmonella arizonae (strain ATCC BAA-731 / CDC346-86 / RSK2980) protein is RNA-binding protein Hfq.